Reading from the N-terminus, the 344-residue chain is Signal peptide peptidase (344 aa).

Over 1-11 the chain is Lumenal; that stretch reads MKNCERFANLA. The chain crosses the membrane as a helical span at residues 12 to 32; it reads LAGLTLAPLVVRVNPNLNVIL. The Cytoplasmic segment spans residues 33-62; that stretch reads TACITVYVGCFRSVKDTPPTETMSKEHAMR. Residues 63-83 form a helical membrane-spanning segment; sequence FPLVGSAMLLSLFLLFKFLSK. Over 84–89 the chain is Lumenal; sequence DLVNAV. The chain crosses the membrane as a helical span at residues 90–110; the sequence is LTAYFFVLGIVALSATLLPAI. The Cytoplasmic segment spans residues 111–136; that stretch reads RRFLPNPWNDNLIVWRFPYFKSLEVE. A helical membrane pass occupies residues 137-157; that stretch reads FTKSQVVAGIPGTFFCAWYAW. Topologically, residues 158 to 160 are lumenal; sequence KKH. A helical transmembrane segment spans residues 161-181; that stretch reads WLANNILGLSFCIQGIEMLSL. The Cytoplasmic portion of the chain corresponds to 182-188; it reads GSFKTGA. Residues 189-209 form a helical membrane-spanning segment; the sequence is ILLAGLFFYDIFWVFFTPVMV. The active site involves Asp-198. Topologically, residues 210 to 230 are lumenal; that stretch reads SVAKSFDAPIKLLFPTGDALR. A helical transmembrane segment spans residues 231 to 251; that stretch reads PYSMLGLGDIVIPGIFVALAL. The active site involves Asp-239. Residues 252–263 are Cytoplasmic-facing; the sequence is RFDVSRRRQPQY. The helical transmembrane segment at 264-284 threads the bilayer; it reads FTSAFIGYAVGVILTIVVMNW. The Lumenal portion of the chain corresponds to 285 to 290; sequence FQAAQP. The short motif at 290 to 292 is the PAL element; sequence PAL. A helical membrane pass occupies residues 291-311; that stretch reads ALLYIVPAVIGFLASHCIWNG. The Cytoplasmic portion of the chain corresponds to 312 to 344; it reads DIKPLLAFDESKTEEATTDESKTSEEVNKAHDE. The interval 323–344 is disordered; the sequence is KTEEATTDESKTSEEVNKAHDE.

It belongs to the peptidase A22B family. As to expression, ubiquitous with the highest expression in emerging leaves, roots, and floral tissues (at the protein level). Highly detected in pollen.

It is found in the endoplasmic reticulum membrane. Intramembrane-cleaving aspartic protease (I-CLiP) that cleaves type II membrane signal peptides in the hydrophobic plane of the membrane. Catalyzes intramembrane proteolysis of some signal peptides after they have been cleaved from a preprotein, resulting in the release of the fragment from the ER membrane into the cytoplasm. Plays a critical role in the development and function of the reproductive tissues, especially in pollen development. The protein is Signal peptide peptidase (SPP) of Arabidopsis thaliana (Mouse-ear cress).